Reading from the N-terminus, the 958-residue chain is MRTHTRGAPSVFFIYLLCFVSAYITDENPEVMIPFTNANYDSHPMLYFSRAEVAELQLRAASSHEHIAARLTEAVHTMLSSPLEYLPPWDPKDYSARWNEIFGNNLGALAMFCVLYPENIEARDMAKDYMERMAAQPSWLVKDAPWDEVPLAHSLVGFATAYDFLYNYLSKTQQEKFLEVIANASGYMYETSYRRGWGFQYLHNHQPTNCMALLTGSLVLMNQGYLQEAYLWTKQVLTIMEKSLVLLREVTDGSLYEGVAYGSYTTRSLFQYMFLVQRHFNINHFGHPWLKQHFAFMYRTILPGFQRTVAIADSNYNWFYGPESQLVFLDKFVMRNGSGNWLADQIRRNRVVEGPGTPSKGQRWCTLHTEFLWYDGSLKSVPPPDFGTPTLHYFEDWGVVTYGSALPAEINRSFLSFKSGKLGGRAIYDIVHRNKYKDWIKGWRNFNAGHEHPDQNSFTFAPNGVPFITEALYGPKYTFFNNVLMFSPAVSKSCFSPWVGQVTEDCSSKWSKYKHDLAASCQGRVVAAEEKNGVVFIRGEGVGAYNPQLNLKNVQRNLILLHPQLLLLVDQIHLGEESPLETAASFFHNVDVPFEETVVDGVHGAFIRQRDGLYKMYWMDDTGYSEKATFASVTYPRGYPYNGTNYVNVTMHLRSPITRAAYLFIGPSIDVQSFTVHGDSQQLDVFIATSKHAYATYLWTGEATGQSAFAQVIADRHKILFDRNSAIKSSIVPEVKDYAAIVEQNLQHFKPVFQLLEKQILSRVRNTASFRKTAERLLRFSDKRQTEEAIDRIFAISQQQQQQSKSKKNRRAGKRYKFVDAVPDIFAQIEVNEKKIRQKAQILAQKELPIDEDEEMKDLLDFADVTYEKHKNGGLIKGRFGQARMVTTTHSRAPSLSASYTRLFLILNIAIFFVMLAMQLTYFQRAQSLHGQRCLYAVLLIDSCILLWLYSSCSQSQC.

Positions 1-22 (MRTHTRGAPSVFFIYLLCFVSA) are cleaved as a signal peptide. At 23–902 (YITDENPEVM…APSLSASYTR (880 aa)) the chain is on the lumenal side. A glycan (N-linked (GlcNAc...) (complex) asparagine) is linked at asparagine 183. The Proton donor role is filled by histidine 205. Residue tyrosine 261 is part of the active site. An N-linked (GlcNAc...) (high mannose) asparagine glycan is attached at asparagine 336. N-linked (GlcNAc...) (complex) asparagine glycosylation is present at asparagine 411. Positions 452 and 470 each coordinate Mn(2+). Tyrosine 473 is a catalytic residue. Residue asparagine 481 coordinates Mn(2+). Asparagine 642 carries an N-linked (GlcNAc...) (complex) asparagine glycan. An N-linked (GlcNAc...) (paucimannose) asparagine glycan is attached at asparagine 648. The chain crosses the membrane as a helical span at residues 903–923 (LFLILNIAIFFVMLAMQLTYF). The Cytoplasmic segment spans residues 924-933 (QRAQSLHGQR). The helical transmembrane segment at 934–954 (CLYAVLLIDSCILLWLYSSCS) threads the bilayer. Residues 955–958 (QSQC) lie on the Lumenal side of the membrane.

The protein belongs to the dermatan-sulfate isomerase family. Mn(2+) is required as a cofactor. N-glycosylated. Glycosylation is important for enzymatic activity. Ubiquitously expressed with higher expression in kidney and ovary and lower expression in brain, colon and thymus. Also expressed in renal cell carcinomas, brain tumors, and in a part of melanomas and adenocarcinomas from organs other than the breast. Expressed in squamous cell carcinomas (SCC), glioma, and some adenocarcinoma cell lines, but not in breast cancer cell lines or any normal tissues (at protein level).

The protein resides in the endoplasmic reticulum membrane. The protein localises to the golgi apparatus membrane. Its subcellular location is the cytoplasmic vesicle membrane. It is found in the microsome membrane. It catalyses the reaction chondroitin 4'-sulfate = dermatan 4'-sulfate. Its pathway is glycan metabolism; chondroitin sulfate biosynthesis. It functions in the pathway glycan metabolism; heparan sulfate biosynthesis. Converts D-glucuronic acid to L-iduronic acid (IdoUA) residues. Plays an important role in the biosynthesis of the glycosaminoglycan/mucopolysaccharide dermatan sulfate. The polypeptide is Dermatan-sulfate epimerase (DSE) (Homo sapiens (Human)).